We begin with the raw amino-acid sequence, 156 residues long: 3-dehydroquinate dehydratase 1 (156 aa).

Tyrosine 32 serves as the catalytic Proton acceptor. The substrate site is built by asparagine 84, histidine 90, and aspartate 97. Histidine 110 acts as the Proton donor in catalysis. Residues 111-112 and arginine 121 contribute to the substrate site; that span reads LS.

This sequence belongs to the type-II 3-dehydroquinase family. Homododecamer.

It catalyses the reaction 3-dehydroquinate = 3-dehydroshikimate + H2O. Its pathway is metabolic intermediate biosynthesis; chorismate biosynthesis; chorismate from D-erythrose 4-phosphate and phosphoenolpyruvate: step 3/7. Catalyzes a trans-dehydration via an enolate intermediate. In Ralstonia nicotianae (strain ATCC BAA-1114 / GMI1000) (Ralstonia solanacearum), this protein is 3-dehydroquinate dehydratase 1 (aroQ1).